A 155-amino-acid chain; its full sequence is Arginine repressor (155 aa).

This sequence belongs to the ArgR family.

It is found in the cytoplasm. It participates in amino-acid biosynthesis; L-arginine biosynthesis [regulation]. Its function is as follows. Regulates arginine biosynthesis genes. The polypeptide is Arginine repressor (Histophilus somni (strain 129Pt) (Haemophilus somnus)).